Consider the following 256-residue polypeptide: Neuroendocrine secretory protein 55 (256 aa).

The N-terminal stretch at 1–46 (MDRRSRAHQWRRARHNYNDLCPPIGRRAATALLWLSCSIALLRALA) is a signal peptide. The interval 61 to 256 (SFLNAHHRSA…RKGPIPIRRH (196 aa)) is disordered. Residues 86-103 (ESDHEHEEAEPELARPEC) are compositionally biased toward basic and acidic residues. 2 stretches are compositionally biased toward acidic residues: residues 104 to 139 (LEYDQDDYETETDSETEPESDIQSETEFETEPETEP) and 206 to 216 (LDEDPRDPEES). Residues 225 to 236 (QPRRCKTRRPAR) are compositionally biased toward basic residues.

This sequence belongs to the NESP55 family. Post-translationally, binds keratan sulfate chains. In terms of processing, may be proteolytically processed to give rise to a number of active peptides.

The protein localises to the cytoplasmic vesicle. Its subcellular location is the secretory vesicle. It is found in the synaptic vesicle. It localises to the secreted. The chain is Neuroendocrine secretory protein 55 from Rattus norvegicus (Rat).